The primary structure comprises 507 residues: MFHFTRILAAFLLPTLCFCGYSTAPSSTVSIDNSLIGEPEVVCETASISLLFKTRNSFNGKVFVKGYVSEPSCMTVGDGKTGHRFEVRHDSCGVRRQREINGVVISATVIISFHSIFITKIDRAYRVSCFYVEGTKKVHNHVDISALTTQLLESETQLPVCRYEILNEAGGSPIKYARIGDQVYHKWTCVAELENVYCMKVHSCTVYDGQGGPPVTVIDANGCSVDGVILQNLEYTSDLTAGKLAPVFKFADKAGLYFNCQIQLTIKDVNYGCSNTQPQCPTSQYVVEPAQKTTETAEPYPYDSHESGYPTRPANYPVASSRYPIPTTQAPASYPSSPAPPPPGADIDNGYPEPQPIYIAETPENAYDGIVGFNDTEQPFTTSAAYTEDGVYSRLIKRNVVESTEQINASNKKRPVTVGDIDLPERGILVFGLEEMEDGETTNAGDHGATRALREARNSQEKTCFSTSRMYFTLILLCLLFATTVVVFIVIVQKQRQILAQTAFFKP.

Residues 1 to 19 form the signal peptide; sequence MFHFTRILAAFLLPTLCFC. The Extracellular portion of the chain corresponds to 20–471; the sequence is GYSTAPSSTV…KTCFSTSRMY (452 aa). Residues 42-280 enclose the ZP domain; it reads VCETASISLL…YGCSNTQPQC (239 aa). Positions 292 to 350 are disordered; sequence KTTETAEPYPYDSHESGYPTRPANYPVASSRYPIPTTQAPASYPSSPAPPPPGADIDNG. 2 N-linked (GlcNAc...) asparagine glycosylation sites follow: Asn374 and Asn408. The chain crosses the membrane as a helical span at residues 472 to 492; the sequence is FTLILLCLLFATTVVVFIVIV. At 493–507 the chain is on the cytoplasmic side; that stretch reads QKQRQILAQTAFFKP.

It localises to the cell membrane. In terms of biological role, plays a role in alae formation and subsequent cuticle attachment in adults. The sequence is that of Cuticlin-4 from Caenorhabditis elegans.